The sequence spans 354 residues: Alternative oxidase, mitochondrial (354 aa).

The N-terminal 64 residues, 1-64 (MNSMSTTGPI…RFISSTPQSQ (64 aa)), are a transit peptide targeting the mitochondrion. A helical membrane pass occupies residues 153–173 (FVFLESVAGVPGMVGGMLRHL). 3 residues coordinate Fe cation: Glu-157, Glu-196, and His-199. A helical transmembrane segment spans residues 215-235 (LMVLGAQGVFFNGFFLSYLIS). Fe cation is bound by residues Glu-247, Glu-302, and His-305. Residues 333–354 (KPHPGKGIKHLKTTGWEREEVV) form a disordered region. Basic residues predominate over residues 335 to 344 (HPGKGIKHLK).

This sequence belongs to the alternative oxidase family. Fe cation serves as cofactor.

The protein localises to the mitochondrion inner membrane. Catalyzes cyanide-resistant oxygen consumption. May increase respiration when the cytochrome respiratory pathway is restricted, or in response to low temperatures. The chain is Alternative oxidase, mitochondrial (alxA) from Emericella nidulans (strain FGSC A4 / ATCC 38163 / CBS 112.46 / NRRL 194 / M139) (Aspergillus nidulans).